Here is a 101-residue protein sequence, read N- to C-terminus: Rho GTPase-activating protein 39 (101 aa).

The 96-residue stretch at 1-96 (YEQCIAHYES…VLIQHLDTSF (96 aa)) folds into the Rho-GAP domain.

In terms of tissue distribution, preoptic area and testis.

The polypeptide is Rho GTPase-activating protein 39 (Arhgap39) (Rattus norvegicus (Rat)).